We begin with the raw amino-acid sequence, 185 residues long: Endonuclease IV (185 aa).

It carries out the reaction Endonucleolytic cleavage of the 5' phosphodiester bond of deoxycytidine in single-stranded DNA.. In terms of biological role, cleaves single-stranded DNA in a dC-specific manner. The cleavage occurs exclusively at the 5'-proximal position (dC1) within a dCs tract having a minimal size of 6 bases. These specific cleavages may have a detrimental effect on the replication of host dC-containing DNA. The protein is Endonuclease IV (denB) of Enterobacteria phage T4 (Bacteriophage T4).